We begin with the raw amino-acid sequence, 76 residues long: Alpha/kappa-conotoxin-like pl14.1 (76 aa).

The first 27 residues, 1-27, serve as a signal peptide directing secretion; that stretch reads MPSVRSVTCCCLLWMMLSVQLVTPGSP. The propeptide occupies 28-39; sequence ATAQLSGQRTAR. Cystine bridges form between cysteine 46/cysteine 61 and cysteine 50/cysteine 63. Position 64 is an asparagine amide (asparagine 64). Positions 65 to 76 are excised as a propeptide; that stretch reads GKRDVVSSSMAV.

Belongs to the conotoxin J superfamily. As to expression, expressed by the venom duct.

It is found in the secreted. Highly inhibits both nicotinic acetylcholine receptors (neuronal (alpha-3/beta-4) and muscular (alpha-1/beta-1/epsilon/delta) subtypes) and the voltage-gated potassium channel Kv1.6/KCNA6 subtype. In Conus planorbis (Planorbis cone), this protein is Alpha/kappa-conotoxin-like pl14.1.